We begin with the raw amino-acid sequence, 506 residues long: Apolipoprotein N-acyltransferase (506 aa).

The next 6 helical transmembrane spans lie at 26 to 46, 66 to 86, 89 to 109, 113 to 133, 166 to 186, and 192 to 212; these read FAPY…LILI, FASG…MPLA, LFLM…FTWS, FFAK…WLIA, GVEL…YAVI, and MLLI…WDWV. Positions 225-471 constitute a CN hydrolase domain; sequence IQGNVDQNLK…TAVLRAELTP (247 aa). The active-site Proton acceptor is Glu-264. Lys-330 is a catalytic residue. The active-site Nucleophile is the Cys-382. A helical transmembrane segment spans residues 479-499; the sequence is HQLGSWPLYIWVALSLALAWW.

This sequence belongs to the CN hydrolase family. Apolipoprotein N-acyltransferase subfamily.

It is found in the cell inner membrane. The enzyme catalyses N-terminal S-1,2-diacyl-sn-glyceryl-L-cysteinyl-[lipoprotein] + a glycerophospholipid = N-acyl-S-1,2-diacyl-sn-glyceryl-L-cysteinyl-[lipoprotein] + a 2-acyl-sn-glycero-3-phospholipid + H(+). It participates in protein modification; lipoprotein biosynthesis (N-acyl transfer). Catalyzes the phospholipid dependent N-acylation of the N-terminal cysteine of apolipoprotein, the last step in lipoprotein maturation. This chain is Apolipoprotein N-acyltransferase, found in Vibrio vulnificus (strain CMCP6).